The following is a 364-amino-acid chain: Probable dual-specificity RNA methyltransferase RlmN (364 aa).

Catalysis depends on E107, which acts as the Proton acceptor. The Radical SAM core domain occupies H113–D346. A disulfide bridge links C120 with C351. The [4Fe-4S] cluster site is built by C127, C131, and C134. Residues G177–E178, S209, S232–H234, and N308 each bind S-adenosyl-L-methionine. C351 acts as the S-methylcysteine intermediate in catalysis.

Belongs to the radical SAM superfamily. RlmN family. Requires [4Fe-4S] cluster as cofactor.

The protein localises to the cytoplasm. It carries out the reaction adenosine(2503) in 23S rRNA + 2 reduced [2Fe-2S]-[ferredoxin] + 2 S-adenosyl-L-methionine = 2-methyladenosine(2503) in 23S rRNA + 5'-deoxyadenosine + L-methionine + 2 oxidized [2Fe-2S]-[ferredoxin] + S-adenosyl-L-homocysteine. The catalysed reaction is adenosine(37) in tRNA + 2 reduced [2Fe-2S]-[ferredoxin] + 2 S-adenosyl-L-methionine = 2-methyladenosine(37) in tRNA + 5'-deoxyadenosine + L-methionine + 2 oxidized [2Fe-2S]-[ferredoxin] + S-adenosyl-L-homocysteine. In terms of biological role, specifically methylates position 2 of adenine 2503 in 23S rRNA and position 2 of adenine 37 in tRNAs. Confers resistance to some classes of antibiotics. The polypeptide is Probable dual-specificity RNA methyltransferase RlmN (Staphylococcus aureus (strain bovine RF122 / ET3-1)).